A 211-amino-acid polypeptide reads, in one-letter code: Large ribosomal subunit protein eL13 (211 aa).

At Lys16 the chain carries N6-acetyllysine. Ser52, Ser77, and Ser106 each carry phosphoserine. Glycyl lysine isopeptide (Lys-Gly) (interchain with G-Cter in SUMO2) cross-links involve residues Lys123 and Lys145. Lys174 is covalently cross-linked (Glycyl lysine isopeptide (Lys-Gly) (interchain with G-Cter in SUMO1); alternate). Residues Lys174 and Lys177 each participate in a glycyl lysine isopeptide (Lys-Gly) (interchain with G-Cter in SUMO2); alternate cross-link. Lys177 bears the N6-acetyllysine; alternate mark.

Belongs to the eukaryotic ribosomal protein eL13 family. In terms of assembly, component of the 60S large ribosomal subunit (LSU).

The protein resides in the cytoplasm. Component of the ribosome, a large ribonucleoprotein complex responsible for the synthesis of proteins in the cell. The small ribosomal subunit (SSU) binds messenger RNAs (mRNAs) and translates the encoded message by selecting cognate aminoacyl-transfer RNA (tRNA) molecules. The large subunit (LSU) contains the ribosomal catalytic site termed the peptidyl transferase center (PTC), which catalyzes the formation of peptide bonds, thereby polymerizing the amino acids delivered by tRNAs into a polypeptide chain. The nascent polypeptides leave the ribosome through a tunnel in the LSU and interact with protein factors that function in enzymatic processing, targeting, and the membrane insertion of nascent chains at the exit of the ribosomal tunnel. As part of the LSU, it is probably required for its formation and the maturation of rRNAs. Plays a role in bone development. This chain is Large ribosomal subunit protein eL13 (RPL13), found in Cricetulus griseus (Chinese hamster).